Here is a 192-residue protein sequence, read N- to C-terminus: Ion-translocating oxidoreductase complex subunit B (192 aa).

The interval 1-26 is hydrophobic; that stretch reads MNTIWIAVGALTLLGLVFGAILGYAS. Residues 32-91 form the 4Fe-4S domain; sequence EDDPVVEKIDAILPQSQCGQCGYPGCRPYAEAVGLQGEKINRCAPGGEAVMLKIAELLNV. Residues Cys49, Cys52, Cys57, Cys74, Cys117, Cys120, Cys123, Cys127, Cys147, Cys150, Cys153, and Cys157 each contribute to the [4Fe-4S] cluster site. 2 4Fe-4S ferredoxin-type domains span residues 108–137 and 138–167; these read MLAVIDENNCIGCTKCIQACPVDAIVGATR and AMHTVMSDLCTGCNLCVDPCPTHCIELRPV.

This sequence belongs to the 4Fe4S bacterial-type ferredoxin family. RnfB subfamily. As to quaternary structure, the complex is composed of six subunits: RsxA, RsxB, RsxC, RsxD, RsxE and RsxG. [4Fe-4S] cluster serves as cofactor.

It localises to the cell inner membrane. In terms of biological role, part of a membrane-bound complex that couples electron transfer with translocation of ions across the membrane. Required to maintain the reduced state of SoxR. This Salmonella dublin (strain CT_02021853) protein is Ion-translocating oxidoreductase complex subunit B.